A 373-amino-acid polypeptide reads, in one-letter code: Leucine-, isoleucine-, valine-, threonine-, and alanine-binding protein (373 aa).

A signal peptide spans 1–26 (MKKGTQRLSRLFAAMAIAGFASYSMA). Cys-80 and Cys-105 are disulfide-bonded.

The protein belongs to the leucine-binding protein family.

The protein localises to the periplasm. Its function is as follows. Component of the high-affinity leucine, isoleucine, valine transport system I (LIV-I), which is operative without Na(+) and is specific for alanine and threonine, in addition to branched-chain amino acids. Binds L-leucine, L-isoleucine, L-valine, L-threonine and L-alanine with nanomolar affinities. Can also bind L-homoserine with high affinity. This Pseudomonas aeruginosa (strain ATCC 15692 / DSM 22644 / CIP 104116 / JCM 14847 / LMG 12228 / 1C / PRS 101 / PAO1) protein is Leucine-, isoleucine-, valine-, threonine-, and alanine-binding protein (braC).